We begin with the raw amino-acid sequence, 562 residues long: uncharacterized protein (562 aa).

The next 5 membrane-spanning stretches (helical) occupy residues 10-27, 34-53, 63-85, 92-114, and 155-177; these read IYPE…YWVG, FSLG…GQFD, IFFL…QGIA, ALFA…KIAG, and FSVI…AIVL. RCK C-terminal domains are found at residues 204-288 and 290-377; these read TENA…HPDS and DETQ…QLGV. 6 helical membrane-spanning segments follow: residues 387–404, 408–430, 443–465, 475–497, 504–526, and 539–561; these read VAFW…GSLV, GNLP…FSWV, PTVW…ISAG, LGFS…AALV, FHPA…LGMI, and YTIT…ILIL.

The protein belongs to the AAE transporter (TC 2.A.81) family.

It localises to the cell membrane. This is an uncharacterized protein from Shewanella oneidensis (strain ATCC 700550 / JCM 31522 / CIP 106686 / LMG 19005 / NCIMB 14063 / MR-1).